The sequence spans 691 residues: MTDNNHYENNESNENSSENSKVDEARAGAFERFTNRKKRFRENAQKNGESSHHEAPSHHKKEHRPNKKPNNHHKQKHAKTRNYAKEELDSNKVEGVTEILHVNERGTLGFHKELKKGVETNNKIQVEHLNPHYKMNLNSKASVKITPLGGLGEIGGNMMVIETPKSAIVIDAGMSFPKEGLFGVDILIPDFSYLHQIKDKIAGIIITHAHEDHIGATPYLFKELQFPLYGTPLSLGLIGSKFDEHGLKKYRSYFKIVEKRCPISVGEFIIEWIHITHSIIDSSALAIQTKAGTIIHTGDFKIDHTPVDNLPTDLYRLAHYGEKGVMLLLSDSTNSHKSGTTPSESTIAPAFDTLFKEAQGRVIMSTFSSNIHRVYQAIQYGIKYNRKIAVIGRSMEKNLDIARELGYIHLPYQSFIEANEVAKYPDNEVLIVTTGSQGETMSALYRMATDEHRHISIKPNDLVIISAKAIPGNEASVSAVLNFLIKKEAKVAYQEFDNIHVSGHAAQEEQKLMLRLIKPKFFLPVHGEYNHVARHKQTAISCGVPEKNIYLMEDGDQVEVGPAFIKKVGTIKSGKSYVDNQSNLSIDTSIVQQREEVASAGVFAATIFVNKNKQALLESSQFSSLGLVGFKDEKHLIKEIQGGLEMLLKSSNAEILNNPKKLEDHTRNFIRKALFKKFRKYPAIICHAHSF.

A disordered region spans residues 1–89; sequence MTDNNHYENN…TRNYAKEELD (89 aa). Residues 1 to 132 form a loss of region decreases protein stability, still able to interact with RhpA, but has decreased RNase activity even on ssRNA region; it reads MTDNNHYENN…KIQVEHLNPH (132 aa). Positions 10–19 are enriched in low complexity; the sequence is NESNENSSEN. Basic and acidic residues predominate over residues 41 to 57; sequence RENAQKNGESSHHEAPS. A compositionally biased stretch (basic residues) spans 58–82; the sequence is HHKKEHRPNKKPNNHHKQKHAKTRN. An N6-acetyllysine mark is found at Lys-134 and Lys-140. 6 residues coordinate Zn(2+): His-208, His-210, Asp-212, His-213, His-277, and Asp-299. Lys-323, Lys-337, and Lys-397 each carry N6-acetyllysine. A substrate-binding site is contributed by 500–504; it reads HVSGH. Lys-511 is modified (N6-acetyllysine). Residue His-526 participates in Zn(2+) binding. N6-acetyllysine is present on residues Lys-547, Lys-634, and Lys-649.

Belongs to the metallo-beta-lactamase superfamily. RNA-metabolizing metallo-beta-lactamase-like family. Bacterial RNase J subfamily. Homodimer. Homotetramer; dimer of homodimers. Interacts with RNA helicase RphA, might be a member of a minimal RNA degradosome complex. Zn(2+) is required as a cofactor. Post-translationally, acetylated on nine lysine residues. Some of the residues are acetylated by multiple different mechanisms. RimL is partially responsible for the acetylation of Lys-323, Lys-397 and Lys-649. HPB8_1270 homolog is partially responsible for the acetylation of Lys-323, Lys-397, Lys-511 and Lys-649. Acetyl-phosphate-mediated non-enzymatic acetylation pathway takes part in the acetylation of Lys-134, Lys-323, Lys-397, Lys-511 and Lys-649. Acetylation of the remaining residues Lys-140, Lys-337, Lys-547 and Lys-634 occurs by a yet undetermined mechanism. Acetylation on a number of these residues is important for growth regulation and proper cell morphology.

It localises to the cytoplasm. Its activity is regulated as follows. Catalytic activity is regulated by the balance between homodimers and homotetramers, with homotetramers being the active forms of this enzyme. Acetylation allosterically regulates the homooligomerization state and hence the catalytic activity. Its function is as follows. An RNase that has 5'-3' exoribonuclease and endoribonuclease activity. Degrades 5'-monophosphorylated ssRNA and dsRNA, considerably more active on ssRNA. Association with RhpA significantly increases the dsRNase activity. Degrades RNA substrate with hairpin structures at both ends with low activity, but presence of RhpA significantly increases the activity on this substrate. Stimulates ATPase activity of RNA helicase RhpA. Involved in stabilization of mRNA but apparently not rRNA. The sequence is that of Ribonuclease J from Helicobacter pylori (strain B128).